The following is a 957-amino-acid chain: Glycine dehydrogenase (decarboxylating) (957 aa).

N6-(pyridoxal phosphate)lysine is present on K702.

This sequence belongs to the GcvP family. In terms of assembly, the glycine cleavage system is composed of four proteins: P, T, L and H. The cofactor is pyridoxal 5'-phosphate.

It carries out the reaction N(6)-[(R)-lipoyl]-L-lysyl-[glycine-cleavage complex H protein] + glycine + H(+) = N(6)-[(R)-S(8)-aminomethyldihydrolipoyl]-L-lysyl-[glycine-cleavage complex H protein] + CO2. The glycine cleavage system catalyzes the degradation of glycine. The P protein binds the alpha-amino group of glycine through its pyridoxal phosphate cofactor; CO(2) is released and the remaining methylamine moiety is then transferred to the lipoamide cofactor of the H protein. The chain is Glycine dehydrogenase (decarboxylating) from Bradyrhizobium sp. (strain ORS 278).